The primary structure comprises 2209 residues: Genome polyprotein (2209 aa).

Residue Gly2 is the site of N-myristoyl glycine; by host attachment. Residues 2–1520 (GAQVSSQKVG…NINRAMTILQ (1519 aa)) lie on the Cytoplasmic side of the membrane. The segment at 580–600 (GLGQMLESMIDNTVRETVGAA) is amphipathic alpha-helix. Active-site for protease 2A activity residues include His901 and Asp919. Positions 936 and 938 each coordinate Zn(2+). Cys990 functions as the For protease 2A activity in the catalytic mechanism. Zn(2+)-binding residues include Cys996 and His998. Residues 1128 to 1200 (GDSWLKKFTE…HQSCPSQEHQ (73 aa)) form a membrane-binding region. The interval 1128-1266 (GDSWLKKFTE…SPGTGKSVAT (139 aa)) is oligomerization. The interval 1149 to 1153 (SNKIS) is RNA-binding. The region spanning 1232-1388 (EHTINNYIQF…NEYSRDGKLN (157 aa)) is the SF3 helicase domain. Position 1256-1263 (1256-1263 (GSPGTGKS)) interacts with ATP. The Zn(2+) site is built by Cys1396, Cys1399, Cys1408, and Cys1413. The C4-type zinc-finger motif lies at 1396–1413 (CKNCHQPANFKRCCPLVC). The RNA-binding stretch occupies residues 1440–1447 (ERNRRSNI). The segment at 1451–1456 (MEALFQ) is oligomerization. An intramembrane segment occupies 1521–1536 (AVTTFAAVAGVVYVMY). At 1537-2209 (KLFAGHQGAY…TLYRRWLDSF (673 aa)) the chain is on the cytoplasmic side. At Tyr1546 the chain carries O-(5'-phospho-RNA)-tyrosine. One can recognise a Peptidase C3 domain in the interval 1566-1744 (GPGFDYAVAM…FAAALKRSYF (179 aa)). Active-site for protease 3C activity residues include His1605, Glu1636, and Cys1712. The RdRp catalytic domain occupies 1975–2090 (EKLFAFDYTG…SYPHEVDASL (116 aa)). Residues Asp1981 and Asp2076 each coordinate Mg(2+).

This sequence belongs to the picornaviruses polyprotein family. In terms of assembly, interacts with capsid protein VP1 and capsid protein VP3 to form heterotrimeric protomers. Interacts with capsid protein VP0, and capsid protein VP3 to form heterotrimeric protomers. Interacts with human PVR. Five protomers subsequently associate to form pentamers which serve as building blocks for the capsid. Interacts with capsid protein VP2, capsid protein VP3 and capsid protein VP4 following cleavage of capsid protein VP0. As to quaternary structure, interacts with capsid protein VP1 and capsid protein VP3 in the mature capsid. In terms of assembly, interacts with capsid protein VP0 and capsid protein VP1 to form heterotrimeric protomers. Five protomers subsequently associate to form pentamers which serve as building blocks for the capsid. Interacts with capsid protein VP4 in the mature capsid. Interacts with protein 2C; this interaction may be important for virion morphogenesis. Interacts with capsid protein VP1 and capsid protein VP3. As to quaternary structure, homodimer. In terms of assembly, homohexamer; forms a hexameric ring structure with 6-fold symmetry characteristic of AAA+ ATPases. Interacts (via N-terminus) with host RTN3 (via reticulon domain); this interaction is important for viral replication. Interacts with capsid protein VP3; this interaction may be important for virion morphogenesis. Interacts with protein 3CD. As to quaternary structure, homodimer. Interacts with host GBF1. Interacts (via GOLD domain) with host ACBD3 (via GOLD domain); this interaction allows the formation of a viral protein 3A/ACBD3 heterotetramer with a 2:2 stoichiometry, which will stimulate the recruitment of host PI4KB in order to synthesize PI4P at the viral RNA replication sites. In terms of assembly, interacts with RNA-directed RNA polymerase. Interacts with protein 3AB and with RNA-directed RNA polymerase. As to quaternary structure, interacts with Viral protein genome-linked and with protein 3CD. It depends on Mg(2+) as a cofactor. Post-translationally, specific enzymatic cleavages in vivo by the viral proteases yield processing intermediates and the mature proteins. Myristoylation is required for the formation of pentamers during virus assembly. Further assembly of 12 pentamers and a molecule of genomic RNA generates the provirion. In terms of processing, during virion maturation, immature virions are rendered infectious following cleavage of VP0 into VP4 and VP2. This maturation seems to be an autocatalytic event triggered by the presence of RNA in the capsid and it is followed by a conformational change infectious virion. Post-translationally, myristoylation is required during RNA encapsidation and formation of the mature virus particle. VPg is uridylylated by the polymerase into VPg-pUpU. This acts as a nucleotide-peptide primer for the genomic RNA replication.

It localises to the virion. Its subcellular location is the host cytoplasm. The protein localises to the host cytoplasmic vesicle membrane. It is found in the host nucleus. The catalysed reaction is a ribonucleoside 5'-triphosphate + H2O = a ribonucleoside 5'-diphosphate + phosphate + H(+). The enzyme catalyses Selective cleavage of Tyr-|-Gly bond in the picornavirus polyprotein.. It catalyses the reaction RNA(n) + a ribonucleoside 5'-triphosphate = RNA(n+1) + diphosphate. It carries out the reaction Selective cleavage of Gln-|-Gly bond in the poliovirus polyprotein. In other picornavirus reactions Glu may be substituted for Gln, and Ser or Thr for Gly.. With respect to regulation, replication or transcription is subject to high level of random mutations by the nucleotide analog ribavirin. Its function is as follows. Forms an icosahedral capsid of pseudo T=3 symmetry with capsid proteins VP2 and VP3. The capsid is 300 Angstroms in diameter, composed of 60 copies of each capsid protein and enclosing the viral positive strand RNA genome. Capsid protein VP1 mainly forms the vertices of the capsid. Capsid protein VP1 interacts with host cell receptor PVR to provide virion attachment to target host cells. This attachment induces virion internalization predominantly through clathrin- and caveolin-independent endocytosis in Hela cells and through caveolin-mediated endocytosis in brain microvascular endothelial cells. Tyrosine kinases are probably involved in the entry process. Virus binding to PVR induces increased junctional permeability and rearrangement of junctional proteins. Modulation of endothelial tight junctions, as well as cytolytic infection of endothelial cells themselves, may result in loss of endothelial integrity which may help the virus to reach the CNS. After binding to its receptor, the capsid undergoes conformational changes. Capsid protein VP1 N-terminus (that contains an amphipathic alpha-helix) and capsid protein VP4 are externalized. Together, they shape a pore in the host membrane through which viral genome is translocated to host cell cytoplasm. In terms of biological role, forms an icosahedral capsid of pseudo T=3 symmetry with capsid proteins VP2 and VP3. The capsid is 300 Angstroms in diameter, composed of 60 copies of each capsid protein and enclosing the viral positive strand RNA genome. Functionally, lies on the inner surface of the capsid shell. After binding to the host receptor, the capsid undergoes conformational changes. Capsid protein VP4 is released, Capsid protein VP1 N-terminus is externalized, and together, they shape a pore in the host membrane through which the viral genome is translocated into the host cell cytoplasm. Component of immature procapsids, which is cleaved into capsid proteins VP4 and VP2 after maturation. Allows the capsid to remain inactive before the maturation step. Its function is as follows. Cysteine protease that cleaves viral polyprotein and specific host proteins. It is responsible for the autocatalytic cleavage between the P1 and P2 regions, which is the first cleavage occurring in the polyprotein. Also cleaves the host translation initiation factor EIF4G1, in order to shut down the capped cellular mRNA translation. Inhibits the host nucleus-cytoplasm protein and RNA trafficking by cleaving host members of the nuclear pores including NUP98, NUP62 and NUP153. Counteracts stress granule formation probably by antagonizing its assembly or promoting its dissassembly. Cleaves and inhibits host IFIH1/MDA5, thereby inhibiting the type-I IFN production and the establishment of the antiviral state. Cleaves and inhibits host MAVS, thereby inhibiting the type-I IFN production and the establishment of the antiviral state. In terms of biological role, plays an essential role in the virus replication cycle by acting as a viroporin. Creates a pore in the host endoplasmic reticulum and as a consequence releases Ca2+ in the cytoplasm of infected cell. In turn, high levels of cytoplasmic calcium may trigger membrane trafficking and transport of viral ER-associated proteins to viroplasms, sites of viral genome replication. Functionally, induces and associates with structural rearrangements of intracellular membranes. Displays RNA-binding, nucleotide binding and NTPase activities. May play a role in virion morphogenesis and viral RNA encapsidation by interacting with the capsid protein VP3. Localizes the viral replication complex to the surface of membranous vesicles. Together with protein 3CD binds the Cis-Active RNA Element (CRE) which is involved in RNA synthesis initiation. Acts as a cofactor to stimulate the activity of 3D polymerase, maybe through a nucleid acid chaperone activity. Its function is as follows. Localizes the viral replication complex to the surface of membranous vesicles. It inhibits host cell endoplasmic reticulum-to-Golgi apparatus transport and causes the disassembly of the Golgi complex, possibly through GBF1 interaction. This would result in depletion of MHC, trail receptors and IFN receptors at the host cell surface. Plays an essential role in viral RNA replication by recruiting ACBD3 and PI4KB at the viral replication sites, thereby allowing the formation of the rearranged membranous structures where viral replication takes place. In terms of biological role, acts as a primer for viral RNA replication and remains covalently bound to viral genomic RNA. VPg is uridylylated prior to priming replication into VPg-pUpU. The oriI viral genomic sequence may act as a template for this. The VPg-pUpU is then used as primer on the genomic RNA poly(A) by the RNA-dependent RNA polymerase to replicate the viral genome. During genome replication, the VPg-RNA linkage is removed by the host TDP2, thereby accelerating replication. During the late stage of the replication cycle, host TDP2 is excluded from sites of viral RNA synthesis and encapsidation, allowing for the generation of progeny virions. Functionally, involved in the viral replication complex and viral polypeptide maturation. It exhibits protease activity with a specificity and catalytic efficiency that is different from protease 3C. Protein 3CD lacks polymerase activity. Protein 3CD binds to the 5'UTR of the viral genome. Major viral protease that mediates proteolytic processing of the polyprotein. Cleaves host EIF5B, contributing to host translation shutoff. Also cleaves host PABPC1, contributing to host translation shutoff. Cleaves host RIGI and thus contributes to the inhibition of type I interferon production. Cleaves host NLRP1, triggers host N-glycine-mediated degradation of the autoinhibitory NLRP1 N-terminal fragment. Inhibits the integrated stress response (ISR) in the infected cell by cleaving host G3BP1. Stress granule formation is thus inhibited, which allows protein synthesis and viral replication. Its function is as follows. Replicates the viral genomic RNA on the surface of intracellular membranes. May form linear arrays of subunits that propagate along a strong head-to-tail interaction called interface-I. Covalently attaches UMP to a tyrosine of VPg, which is used to prime RNA synthesis. The positive stranded RNA genome is first replicated at virus induced membranous vesicles, creating a dsRNA genomic replication form. This dsRNA is then used as template to synthesize positive stranded RNA genomes. ss(+)RNA genomes are either translated, replicated or encapsidated. The sequence is that of Genome polyprotein from Homo sapiens (Human).